The sequence spans 315 residues: Olfactory receptor 3A3 (315 aa).

At 1 to 28 (MESEAGTNRTAVAEFMLLGLVQTEEMQS) the chain is on the extracellular side. N8 carries N-linked (GlcNAc...) asparagine glycosylation. The chain crosses the membrane as a helical span at residues 29–52 (VIFVLLLFAYLVTTGGNLSILAAI). The Cytoplasmic portion of the chain corresponds to 53–60 (LVEPKLHT). A helical membrane pass occupies residues 61-82 (PMYFFLGNLSVLDVGCITVTVP). Residues 83–103 (AMLGRLLSHKSTISYDACLSQ) lie on the Extracellular side of the membrane. C100 and C192 are disulfide-bonded. Residues 104 to 123 (LFFFHLLAGMDCFLLTAMAY) traverse the membrane as a helical segment. Over 124 to 143 (DRFLAICRPLTYSTHMNQRV) the chain is Cytoplasmic. Residues 144 to 161 (QRMLVAVSWTCAFTNALT) traverse the membrane as a helical segment. The Extracellular portion of the chain corresponds to 162-199 (HTIALTTLNFCGPSVINHFYCDLPQLFQLSCSSTQLNE). Residues 200–222 (LLLFVAAAVMAVAPLVFISVSYA) form a helical membrane-spanning segment. Over 223 to 239 (HVVAAVLQIHSAEGRKK) the chain is Cytoplasmic. Residues 240–262 (AFSTCGSHLTVVGIFYGTGVFSY) traverse the membrane as a helical segment. At 263–275 (MRLGSVESSDKDK) the chain is on the extracellular side. Residues 276–295 (GVGVFMTVINPMLNPLIYSL) form a helical membrane-spanning segment. Residues 296 to 315 (RNTDVQGALCQLLVVKRSLT) lie on the Cytoplasmic side of the membrane.

The protein belongs to the G-protein coupled receptor 1 family.

It is found in the cell membrane. Odorant receptor. The protein is Olfactory receptor 3A3 (OR3A3) of Pan troglodytes (Chimpanzee).